Consider the following 87-residue polypeptide: U3-theraphotoxin-Hhn1f (87 aa).

The N-terminal stretch at 1–24 (MVNMKASMFLTSAGLVLLFVVCYA) is a signal peptide. The propeptide occupies 25 to 52 (SESEEKEFPKEMLSSIFAVDNDFKQEER). Intrachain disulfides connect Cys54/Cys67, Cys61/Cys72, and Cys66/Cys79.

The protein belongs to the neurotoxin 10 (Hwtx-1) family. 51 (Hntx-8) subfamily. Hntx-8 sub-subfamily. Expressed by the venom gland.

The protein resides in the secreted. In terms of biological role, ion channel inhibitor. The chain is U3-theraphotoxin-Hhn1f from Cyriopagopus hainanus (Chinese bird spider).